The sequence spans 533 residues: Berberine bridge enzyme-like 12 (533 aa).

An N-terminal signal peptide occupies residues Met1–Ala20. Cys32 and Cys95 are joined by a disulfide. 6 N-linked (GlcNAc...) asparagine glycosylation sites follow: Asn35, Asn70, Asn133, Asn296, Asn412, and Asn417. In terms of domain architecture, FAD-binding PCMH-type spans Ser73–Val249. The 6-(S-cysteinyl)-8alpha-(pros-histidyl)-FAD (His-Cys) cross-link spans His110 to Cys174.

Belongs to the oxygen-dependent FAD-linked oxidoreductase family. FAD serves as cofactor. Post-translationally, the FAD cofactor is bound via a bicovalent 6-S-cysteinyl, 8alpha-N1-histidyl FAD linkage.

It localises to the secreted. The protein localises to the cell wall. This is Berberine bridge enzyme-like 12 from Arabidopsis thaliana (Mouse-ear cress).